A 336-amino-acid polypeptide reads, in one-letter code: Flap endonuclease 1 (336 aa).

The N-domain stretch occupies residues 1-98; sequence MGVDLGDILS…GTLAARAQMK (98 aa). Mg(2+) is bound by residues D27, D80, E150, E152, D171, D173, and D234. The I-domain stretch occupies residues 114-255; that stretch reads DSFRYAQATA…RALKLIREHG (142 aa). An interaction with PCNA region spans residues 328 to 336; it reads GQSTLERWL.

The protein belongs to the XPG/RAD2 endonuclease family. FEN1 subfamily. In terms of assembly, interacts with PCNA. PCNA stimulates the nuclease activity without altering cleavage specificity. The cofactor is Mg(2+).

Structure-specific nuclease with 5'-flap endonuclease and 5'-3' exonuclease activities involved in DNA replication and repair. During DNA replication, cleaves the 5'-overhanging flap structure that is generated by displacement synthesis when DNA polymerase encounters the 5'-end of a downstream Okazaki fragment. Binds the unpaired 3'-DNA end and kinks the DNA to facilitate 5' cleavage specificity. Cleaves one nucleotide into the double-stranded DNA from the junction in flap DNA, leaving a nick for ligation. Also involved in the base excision repair (BER) pathway. Acts as a genome stabilization factor that prevents flaps from equilibrating into structures that lead to duplications and deletions. Also possesses 5'-3' exonuclease activity on nicked or gapped double-stranded DNA. In Methanothrix thermoacetophila (strain DSM 6194 / JCM 14653 / NBRC 101360 / PT) (Methanosaeta thermophila), this protein is Flap endonuclease 1.